The chain runs to 64 residues: Large ribosomal subunit protein bL35 (64 aa).

The span at 1-14 (MKQKTHKGAAKRIK) shows a compositional bias: basic residues. The tract at residues 1-50 (MKQKTHKGAAKRIKISGSGKLRREQANRRHLLEGKPSKRTRRLKGTEDVA) is disordered. Residues 21 to 36 (LRREQANRRHLLEGKP) are compositionally biased toward basic and acidic residues.

Belongs to the bacterial ribosomal protein bL35 family.

This chain is Large ribosomal subunit protein bL35, found in Corynebacterium jeikeium (strain K411).